We begin with the raw amino-acid sequence, 169 residues long: Ribosome maturation factor RimM (169 aa).

One can recognise a PRC barrel domain in the interval 97–169; sequence PGEYYWYQLI…VITVDWDMNF (73 aa).

This sequence belongs to the RimM family. In terms of assembly, binds ribosomal protein uS19.

The protein resides in the cytoplasm. Functionally, an accessory protein needed during the final step in the assembly of 30S ribosomal subunit, possibly for assembly of the head region. Essential for efficient processing of 16S rRNA. May be needed both before and after RbfA during the maturation of 16S rRNA. It has affinity for free ribosomal 30S subunits but not for 70S ribosomes. This chain is Ribosome maturation factor RimM, found in Legionella pneumophila (strain Paris).